Consider the following 519-residue polypeptide: Polyamine aminopropyltransferase (519 aa).

The next 7 membrane-spanning stretches (helical) occupy residues 17–37, 53–73, 86–106, 109–129, 158–178, 180–200, and 208–228; these read LLLV…LALV, LIVA…KPFL, LLGL…AVVG, LWML…ELPL, LGAL…LGMM, GAAA…CVLL, and QFIR…TVLV. The interval 200 to 463 is spermidine synthase; that stretch reads LRHLLPRAQF…FQLCGPEGTE (264 aa). One can recognise a PABS domain in the interval 225–459; sequence TVLVRSDGIV…GDWGFQLCGP (235 aa). Q255 serves as a coordination point for S-methyl-5'-thioadenosine. Spermidine is bound at residue D307. S-methyl-5'-thioadenosine contacts are provided by residues E326 and 358–359; that span reads DA. Residue D379 is the Proton acceptor of the active site.

This sequence belongs to the spermidine/spermine synthase family. As to quaternary structure, homodimer or homotetramer.

It is found in the cell membrane. It catalyses the reaction S-adenosyl 3-(methylsulfanyl)propylamine + putrescine = S-methyl-5'-thioadenosine + spermidine + H(+). It participates in amine and polyamine biosynthesis; spermidine biosynthesis; spermidine from putrescine: step 1/1. Functionally, catalyzes the irreversible transfer of a propylamine group from the amino donor S-adenosylmethioninamine (decarboxy-AdoMet) to putrescine (1,4-diaminobutane) to yield spermidine. This chain is Polyamine aminopropyltransferase, found in Corynebacterium efficiens (strain DSM 44549 / YS-314 / AJ 12310 / JCM 11189 / NBRC 100395).